The following is a 209-amino-acid chain: Large ribosomal subunit protein uL3 (209 aa).

Q150 is subject to N5-methylglutamine.

It belongs to the universal ribosomal protein uL3 family. Part of the 50S ribosomal subunit. Forms a cluster with proteins L14 and L19. Methylated by PrmB.

One of the primary rRNA binding proteins, it binds directly near the 3'-end of the 23S rRNA, where it nucleates assembly of the 50S subunit. The protein is Large ribosomal subunit protein uL3 of Vibrio campbellii (strain ATCC BAA-1116).